Reading from the N-terminus, the 1042-residue chain is Probable inorganic carbon transporter subunit DabA (1042 aa).

Positions 462, 464, 721, and 736 each coordinate Zn(2+).

This sequence belongs to the inorganic carbon transporter (TC 9.A.2) DabA family. As to quaternary structure, forms a complex with DabB. It depends on Zn(2+) as a cofactor.

The protein localises to the cell inner membrane. Functionally, part of an energy-coupled inorganic carbon pump. The chain is Probable inorganic carbon transporter subunit DabA from Nitrosomonas eutropha (strain DSM 101675 / C91 / Nm57).